The chain runs to 205 residues: Large ribosomal subunit protein uL4 (205 aa).

It belongs to the universal ribosomal protein uL4 family. Part of the 50S ribosomal subunit.

Functionally, one of the primary rRNA binding proteins, this protein initially binds near the 5'-end of the 23S rRNA. It is important during the early stages of 50S assembly. It makes multiple contacts with different domains of the 23S rRNA in the assembled 50S subunit and ribosome. Its function is as follows. Forms part of the polypeptide exit tunnel. The chain is Large ribosomal subunit protein uL4 from Thermus thermophilus (strain ATCC BAA-163 / DSM 7039 / HB27).